Reading from the N-terminus, the 816-residue chain is Probable disease resistance protein At4g33300 (816 aa).

An RPW8 domain is found at 1 to 149 (MAITDFFAGE…SLDRVIQQVG (149 aa)). The stretch at 95-111 (TLARKMEKLEKTISNFL) forms a coiled coil. The NB-ARC domain occupies 191–443 (VKKMMFESQG…LDVLINIWIE (253 aa)). 207-214 (GMGGVGKT) lines the ATP pocket. The stretch at 399-415 (SRLLRQMEASLDNLDQT) forms a coiled coil. LRR repeat units lie at residues 681–704 (SLSC…SKLQ), 705–727 (ALEI…ICEL), 729–751 (GLKY…IGKL), and 753–774 (KLEK…AVSL).

It belongs to the disease resistance NB-LRR family.

Functionally, probable disease resistance protein. This chain is Probable disease resistance protein At4g33300, found in Arabidopsis thaliana (Mouse-ear cress).